The following is a 441-amino-acid chain: ATP-dependent protease ATPase subunit HslU (441 aa).

Residues Ile-18, 60–65 (GVGKTE), Asp-254, Glu-319, and Arg-391 contribute to the ATP site.

Belongs to the ClpX chaperone family. HslU subfamily. As to quaternary structure, a double ring-shaped homohexamer of HslV is capped on each side by a ring-shaped HslU homohexamer. The assembly of the HslU/HslV complex is dependent on binding of ATP.

The protein localises to the cytoplasm. In terms of biological role, ATPase subunit of a proteasome-like degradation complex; this subunit has chaperone activity. The binding of ATP and its subsequent hydrolysis by HslU are essential for unfolding of protein substrates subsequently hydrolyzed by HslV. HslU recognizes the N-terminal part of its protein substrates and unfolds these before they are guided to HslV for hydrolysis. The polypeptide is ATP-dependent protease ATPase subunit HslU (Shewanella sediminis (strain HAW-EB3)).